The chain runs to 140 residues: Endoribonuclease YbeY (140 aa).

Zn(2+) is bound by residues His99, His103, and His109.

Belongs to the endoribonuclease YbeY family. Zn(2+) serves as cofactor.

It is found in the cytoplasm. Single strand-specific metallo-endoribonuclease involved in late-stage 70S ribosome quality control and in maturation of the 3' terminus of the 16S rRNA. This is Endoribonuclease YbeY from Wolinella succinogenes (strain ATCC 29543 / DSM 1740 / CCUG 13145 / JCM 31913 / LMG 7466 / NCTC 11488 / FDC 602W) (Vibrio succinogenes).